The following is a 131-amino-acid chain: Protein FAM107B (131 aa).

N-acetylalanine is present on alanine 2. 2 disordered regions span residues 39-78 (MNQK…KKKS) and 100-131 (KLQE…AQES). At lysine 50 the chain carries N6-acetyllysine. Residues 52 to 78 (ELQKVMEKRKRDQVIKQKEEEAQKKKS) show a composition bias toward basic and acidic residues. Residues 61–112 (KRDQVIKQKEEEAQKKKSDLEIELLKRQQKLEQLELEKQKLQEEQENAPEFV) are a coiled coil.

The protein belongs to the FAM107 family.

In Homo sapiens (Human), this protein is Protein FAM107B.